A 240-amino-acid chain; its full sequence is MGRAFEYRRAAKEKRWDKMSKVFPKLAKAITLAAKDGGSEPDTNAKLRTAILNAKAQNMPKDNIDAAIKRASSKEGNLSEITYEGKANFGVLIIMECMTDNPTRTIANLKSYFNKTQGASIVPNGSLEFMFNRKSVFECLKNEVENLKLSLEDLEFALIDYGLEELEEVEDKIIIRGDYNSFKLLNEGFESLKLPILKASLQRIATTPIELNDEQMELTEKLLDRIEDDDDVVALYTNIE.

The protein belongs to the TACO1 family.

The protein resides in the cytoplasm. The polypeptide is Probable transcriptional regulatory protein HP_0162 (Helicobacter pylori (strain ATCC 700392 / 26695) (Campylobacter pylori)).